The sequence spans 195 residues: A-type ATP synthase subunit E (195 aa).

This sequence belongs to the V-ATPase E subunit family. Has multiple subunits with at least A(3), B(3), C, D, E, F, H, I and proteolipid K(x).

Its subcellular location is the cell membrane. In terms of biological role, component of the A-type ATP synthase that produces ATP from ADP in the presence of a proton gradient across the membrane. The chain is A-type ATP synthase subunit E from Halobacterium salinarum (strain ATCC 29341 / DSM 671 / R1).